Reading from the N-terminus, the 111-residue chain is Iron-sulfur cluster insertion protein ErpA (111 aa).

3 residues coordinate iron-sulfur cluster: C39, C103, and C105.

It belongs to the HesB/IscA family. Homodimer. It depends on iron-sulfur cluster as a cofactor.

Functionally, required for insertion of 4Fe-4S clusters for at least IspG. This chain is Iron-sulfur cluster insertion protein ErpA, found in Buchnera aphidicola subsp. Cinara cedri (strain Cc).